The chain runs to 139 residues: Large ribosomal subunit protein uL16 (139 aa).

This sequence belongs to the universal ribosomal protein uL16 family. Part of the 50S ribosomal subunit.

Binds 23S rRNA and is also seen to make contacts with the A and possibly P site tRNAs. In Koribacter versatilis (strain Ellin345), this protein is Large ribosomal subunit protein uL16.